The primary structure comprises 332 residues: Ketol-acid reductoisomerase (NADP(+)) (332 aa).

The KARI N-terminal Rossmann domain occupies 2 to 182 (AKVYHDTEVS…GATRAGVLET (181 aa)). Residues 25–28 (YGSQ), Arg-48, Ser-53, and 83–86 (DTEQ) each bind NADP(+). The active site involves His-108. Gly-134 contributes to the NADP(+) binding site. The KARI C-terminal knotted domain occupies 183 to 328 (TFKEETETDL…KVLREMMPWL (146 aa)). The Mg(2+) site is built by Asp-191, Glu-195, Glu-227, and Glu-231. Position 252 (Ser-252) interacts with substrate.

It belongs to the ketol-acid reductoisomerase family. It depends on Mg(2+) as a cofactor.

It carries out the reaction (2R)-2,3-dihydroxy-3-methylbutanoate + NADP(+) = (2S)-2-acetolactate + NADPH + H(+). It catalyses the reaction (2R,3R)-2,3-dihydroxy-3-methylpentanoate + NADP(+) = (S)-2-ethyl-2-hydroxy-3-oxobutanoate + NADPH + H(+). Its pathway is amino-acid biosynthesis; L-isoleucine biosynthesis; L-isoleucine from 2-oxobutanoate: step 2/4. It functions in the pathway amino-acid biosynthesis; L-valine biosynthesis; L-valine from pyruvate: step 2/4. Functionally, involved in the biosynthesis of branched-chain amino acids (BCAA). Catalyzes an alkyl-migration followed by a ketol-acid reduction of (S)-2-acetolactate (S2AL) to yield (R)-2,3-dihydroxy-isovalerate. In the isomerase reaction, S2AL is rearranged via a Mg-dependent methyl migration to produce 3-hydroxy-3-methyl-2-ketobutyrate (HMKB). In the reductase reaction, this 2-ketoacid undergoes a metal-dependent reduction by NADPH to yield (R)-2,3-dihydroxy-isovalerate. The chain is Ketol-acid reductoisomerase (NADP(+)) from Dictyoglomus turgidum (strain DSM 6724 / Z-1310).